The following is a 280-amino-acid chain: Phosphatidylinositol N-acetylglucosaminyltransferase GPI2 subunit (280 aa).

The Cytoplasmic segment spans residues 1-53 (MTRSPWKRLLWLKQEYPDNYTDPSFIELRARQKAESNQKSDRKLSEAARAQIR). Residues 54–74 (LDFISFYQTILNTSFIYITFT) form a helical membrane-spanning segment. A topological domain (extracellular) is located at residue Y75. The chain crosses the membrane as a helical span at residues 76–96 (IYYYGFDPIPPTIFLSFITLI). Residues 97–108 (ISRTKVDPLLSS) are Cytoplasmic-facing. A helical transmembrane segment spans residues 109 to 129 (FMDVKSSLIITFAMLTLSPVL). The Extracellular segment spans residues 130–135 (KSLSKT). The chain crosses the membrane as a helical span at residues 136-156 (TASDSIWTLSFWLTLWYIFVI). The Cytoplasmic segment spans residues 157–189 (SSTKSKDKPSNLSTNILVALVAVLSSRLSTTID). A helical transmembrane segment spans residues 190-210 (VFCFLLICIQLNIILPTYLSV). Topologically, residues 211 to 220 (TNKVVPIISN) are extracellular. Residues 221–241 (IIVYSFLNVALGWIYMLLIFF) traverse the membrane as a helical segment. The Cytoplasmic portion of the chain corresponds to 242–280 (ASVFYITVLPKWFIYWKINYHKRDNDLLSTWDARTPILD).

This sequence belongs to the PIGC family. As to quaternary structure, component of the phosphatidylinositol N-acetylglucosaminyltransferase (GPI-GlcNAc transferase) complex composed of at least GPI1, GPI2, GPI3, GPI15, GPI19 and ERI1. Interacts with ERI1.

The protein resides in the membrane. It catalyses the reaction a 1,2-diacyl-sn-glycero-3-phospho-(1D-myo-inositol) + UDP-N-acetyl-alpha-D-glucosamine = a 6-(N-acetyl-alpha-D-glucosaminyl)-1-(1,2-diacyl-sn-glycero-3-phospho)-1D-myo-inositol + UDP + H(+). It participates in glycolipid biosynthesis; glycosylphosphatidylinositol-anchor biosynthesis. Functionally, part of the complex catalyzing the transfer of N-acetylglucosamine from UDP-N-acetylglucosamine to phosphatidylinositol, the first step of GPI biosynthesis. This chain is Phosphatidylinositol N-acetylglucosaminyltransferase GPI2 subunit (GPI2), found in Saccharomyces cerevisiae (strain ATCC 204508 / S288c) (Baker's yeast).